A 305-amino-acid chain; its full sequence is Methionyl-tRNA formyltransferase (305 aa).

110 to 113 (SLLP) provides a ligand contact to (6S)-5,6,7,8-tetrahydrofolate.

It belongs to the Fmt family.

It carries out the reaction L-methionyl-tRNA(fMet) + (6R)-10-formyltetrahydrofolate = N-formyl-L-methionyl-tRNA(fMet) + (6S)-5,6,7,8-tetrahydrofolate + H(+). In terms of biological role, attaches a formyl group to the free amino group of methionyl-tRNA(fMet). The formyl group appears to play a dual role in the initiator identity of N-formylmethionyl-tRNA by promoting its recognition by IF2 and preventing the misappropriation of this tRNA by the elongation apparatus. This Ureaplasma parvum serovar 3 (strain ATCC 700970) protein is Methionyl-tRNA formyltransferase.